Consider the following 454-residue polypeptide: MSTTDTIVAQATPPGRGGVGILRVSGRAASEVAHAVLGKLPKPRYADYLPFKDVDGSTLDQGIALYFPGPNSFTGEDVLELQGHGGPVILDLLLKRILALPGLRIARPGEFSERAFLNDKLDLAQAEAIADLIDASSEQAARSAVNSLQGAFSARIHQLVEALTHLRIYVEAAIDFPDEEIDFLSDGKIEGQLNGVMADLEQVRTEARQGSLLREGMKVVIAGRPNAGKSSLLNALAGREAAIVTDIAGTTRDVLREHIHIDGMPLHIIDTAGLREANDEVERIGIERAWNEIEQADRVLFMVDGTTTDATEPAAIWPEFMARLPATLPITVVRNKADITGETLGLTKVNGHSLIRLSARTGEGIDLLRDHLKQSMGFTSNTEGGFLARRRHLQALETAARHLVQGHEQLVSAYAGELLAEELRLAQQSLSEITGEFSSDDLLGRIFSSFCIGK.

Residues Arg23, Glu80, and Lys120 each coordinate (6S)-5-formyl-5,6,7,8-tetrahydrofolate. The TrmE-type G domain maps to 216-377; sequence GMKVVIAGRP…LRDHLKQSMG (162 aa). Residue Asn226 coordinates K(+). GTP contacts are provided by residues 226–231, 245–251, 270–273, 335–338, and 358–360; these read NAGKSS, TDIAGTT, DTAG, NKAD, and SAR. Mg(2+) is bound at residue Ser230. 3 residues coordinate K(+): Thr245, Ile247, and Thr250. A Mg(2+)-binding site is contributed by Thr251. Residue Lys454 participates in (6S)-5-formyl-5,6,7,8-tetrahydrofolate binding.

Belongs to the TRAFAC class TrmE-Era-EngA-EngB-Septin-like GTPase superfamily. TrmE GTPase family. In terms of assembly, homodimer. Heterotetramer of two MnmE and two MnmG subunits. K(+) serves as cofactor.

It is found in the cytoplasm. In terms of biological role, exhibits a very high intrinsic GTPase hydrolysis rate. Involved in the addition of a carboxymethylaminomethyl (cmnm) group at the wobble position (U34) of certain tRNAs, forming tRNA-cmnm(5)s(2)U34. The sequence is that of tRNA modification GTPase MnmE from Yersinia pseudotuberculosis serotype IB (strain PB1/+).